The chain runs to 142 residues: MKTYSAKPADVQRDWYVVDANGKTLGRLASEVAYRLRGKHKPEYTPHVDTGDYIVVVNAEKIAVTGNKASDKMYHQHTGYIGNMKSISFEKLIDKAPERVIEKAVKGMLPKNRLGRAMIKKLKVYAGGEHRHAAQQPQPLDI.

This sequence belongs to the universal ribosomal protein uL13 family. In terms of assembly, part of the 50S ribosomal subunit.

Functionally, this protein is one of the early assembly proteins of the 50S ribosomal subunit, although it is not seen to bind rRNA by itself. It is important during the early stages of 50S assembly. This chain is Large ribosomal subunit protein uL13, found in Alkalilimnicola ehrlichii (strain ATCC BAA-1101 / DSM 17681 / MLHE-1).